A 190-amino-acid polypeptide reads, in one-letter code: Xanthine phosphoribosyltransferase 2 (190 aa).

2 residues coordinate xanthine: leucine 20 and asparagine 27. A 5-phospho-alpha-D-ribose 1-diphosphate-binding site is contributed by 129–133 (ANGCA). Residue lysine 157 participates in xanthine binding.

This sequence belongs to the purine/pyrimidine phosphoribosyltransferase family. Xpt subfamily. As to quaternary structure, homodimer.

It localises to the cytoplasm. The catalysed reaction is XMP + diphosphate = xanthine + 5-phospho-alpha-D-ribose 1-diphosphate. The protein operates within purine metabolism; XMP biosynthesis via salvage pathway; XMP from xanthine: step 1/1. Its function is as follows. Converts the preformed base xanthine, a product of nucleic acid breakdown, to xanthosine 5'-monophosphate (XMP), so it can be reused for RNA or DNA synthesis. The protein is Xanthine phosphoribosyltransferase 2 of Clostridium botulinum (strain Langeland / NCTC 10281 / Type F).